Reading from the N-terminus, the 295-residue chain is Cyclin-G1 (295 aa).

The protein belongs to the cyclin family. Cyclin G subfamily.

The protein resides in the nucleus. In terms of biological role, may play a role in growth regulation. Is associated with G2/M phase arrest in response to DNA damage. May be an intermediate by which p53 mediates its role as an inhibitor of cellular proliferation. The chain is Cyclin-G1 (CCNG1) from Sus scrofa (Pig).